We begin with the raw amino-acid sequence, 292 residues long: N-acetylneuraminate lyase (292 aa).

The aceneuramate site is built by S47 and T48. Y136 acts as the Proton donor in catalysis. Residue K164 is the Schiff-base intermediate with substrate of the active site. Aceneuramate-binding residues include T166, G188, D190, E191, and S207.

Belongs to the DapA family. NanA subfamily. In terms of assembly, homotetramer.

Its subcellular location is the cytoplasm. It carries out the reaction aceneuramate = aldehydo-N-acetyl-D-mannosamine + pyruvate. Its pathway is amino-sugar metabolism; N-acetylneuraminate degradation; D-fructose 6-phosphate from N-acetylneuraminate: step 1/5. Its function is as follows. Catalyzes the reversible aldol cleavage of N-acetylneuraminic acid (sialic acid; Neu5Ac) to form pyruvate and N-acetylmannosamine (ManNAc) via a Schiff base intermediate. The polypeptide is N-acetylneuraminate lyase (Actinobacillus pleuropneumoniae serotype 5b (strain L20)).